Here is a 139-residue protein sequence, read N- to C-terminus: Hydrogenase maturation factor HypA (139 aa).

Histidine 2 contacts Ni(2+). The Zn(2+) site is built by cysteine 73, cysteine 76, cysteine 110, and cysteine 113.

Belongs to the HypA/HybF family.

Functionally, involved in the maturation of [NiFe] hydrogenases. Required for nickel insertion into the metal center of the hydrogenase. This Pyrococcus furiosus (strain ATCC 43587 / DSM 3638 / JCM 8422 / Vc1) protein is Hydrogenase maturation factor HypA.